We begin with the raw amino-acid sequence, 356 residues long: tRNA-specific 2-thiouridylase MnmA (356 aa).

ATP is bound by residues 6–13 (AMSGGVDS) and leucine 32. Residue cysteine 101 is the Nucleophile of the active site. A disulfide bond links cysteine 101 and cysteine 193. ATP is bound at residue glycine 125. The interval 143–145 (KDQ) is interaction with tRNA. Cysteine 193 serves as the catalytic Cysteine persulfide intermediate.

The protein belongs to the MnmA/TRMU family.

The protein localises to the cytoplasm. The catalysed reaction is S-sulfanyl-L-cysteinyl-[protein] + uridine(34) in tRNA + AH2 + ATP = 2-thiouridine(34) in tRNA + L-cysteinyl-[protein] + A + AMP + diphosphate + H(+). Its function is as follows. Catalyzes the 2-thiolation of uridine at the wobble position (U34) of tRNA, leading to the formation of s(2)U34. The protein is tRNA-specific 2-thiouridylase MnmA of Mycobacteroides abscessus (strain ATCC 19977 / DSM 44196 / CCUG 20993 / CIP 104536 / JCM 13569 / NCTC 13031 / TMC 1543 / L948) (Mycobacterium abscessus).